The chain runs to 422 residues: Probable D-serine dehydratase (422 aa).

Lys-105 carries the post-translational modification N6-(pyridoxal phosphate)lysine.

Belongs to the serine/threonine dehydratase family. DsdA subfamily. It depends on pyridoxal 5'-phosphate as a cofactor.

The enzyme catalyses D-serine = pyruvate + NH4(+). The protein is Probable D-serine dehydratase of Carboxydothermus hydrogenoformans (strain ATCC BAA-161 / DSM 6008 / Z-2901).